Consider the following 878-residue polypeptide: Phosphoenolpyruvate carboxylase (878 aa).

Active-site residues include His137 and Lys545.

Belongs to the PEPCase type 1 family. Requires Mg(2+) as cofactor.

The enzyme catalyses oxaloacetate + phosphate = phosphoenolpyruvate + hydrogencarbonate. Functionally, forms oxaloacetate, a four-carbon dicarboxylic acid source for the tricarboxylic acid cycle. This chain is Phosphoenolpyruvate carboxylase, found in Serratia proteamaculans (strain 568).